We begin with the raw amino-acid sequence, 305 residues long: Beta-lactamase ROB-1 (305 aa).

The first 33 residues, 1-33 (MLNKLKIGTLLLLTLTACSPNSVHSVTSNPQPA), serve as a signal peptide directing secretion. Residue S86 is the Acyl-ester intermediate of the active site. 248-250 (KSG) is a binding site for substrate.

The protein belongs to the class-A beta-lactamase family.

It catalyses the reaction a beta-lactam + H2O = a substituted beta-amino acid. This Actinobacillus pleuropneumoniae (Haemophilus pleuropneumoniae) protein is Beta-lactamase ROB-1 (rob1).